The following is a 513-amino-acid chain: 2-isopropylmalate synthase (513 aa).

The 264-residue stretch at L5–V268 folds into the Pyruvate carboxyltransferase domain. Mn(2+) is bound by residues D14, H202, H204, and N239. The segment at R394–I513 is regulatory domain.

This sequence belongs to the alpha-IPM synthase/homocitrate synthase family. LeuA type 1 subfamily. In terms of assembly, homodimer. Mn(2+) serves as cofactor.

It localises to the cytoplasm. The enzyme catalyses 3-methyl-2-oxobutanoate + acetyl-CoA + H2O = (2S)-2-isopropylmalate + CoA + H(+). It functions in the pathway amino-acid biosynthesis; L-leucine biosynthesis; L-leucine from 3-methyl-2-oxobutanoate: step 1/4. Its function is as follows. Catalyzes the condensation of the acetyl group of acetyl-CoA with 3-methyl-2-oxobutanoate (2-ketoisovalerate) to form 3-carboxy-3-hydroxy-4-methylpentanoate (2-isopropylmalate). This Cupriavidus pinatubonensis (strain JMP 134 / LMG 1197) (Cupriavidus necator (strain JMP 134)) protein is 2-isopropylmalate synthase.